A 347-amino-acid polypeptide reads, in one-letter code: Dihydroorotase (347 aa).

Zn(2+)-binding residues include His-14 and His-16. Residues 16–18 (HLR) and Asn-42 contribute to the substrate site. Lys-100, His-137, and His-175 together coordinate Zn(2+). Lys-100 carries the N6-carboxylysine modification. A substrate-binding site is contributed by His-137. Leu-220 is a substrate binding site. Asp-248 serves as a coordination point for Zn(2+). Asp-248 is a catalytic residue. Residues His-252 and Ala-264 each coordinate substrate.

Belongs to the metallo-dependent hydrolases superfamily. DHOase family. Class II DHOase subfamily. Homodimer. Zn(2+) is required as a cofactor.

The enzyme catalyses (S)-dihydroorotate + H2O = N-carbamoyl-L-aspartate + H(+). It functions in the pathway pyrimidine metabolism; UMP biosynthesis via de novo pathway; (S)-dihydroorotate from bicarbonate: step 3/3. Functionally, catalyzes the reversible cyclization of carbamoyl aspartate to dihydroorotate. This Pseudomonas syringae pv. tomato (strain ATCC BAA-871 / DC3000) protein is Dihydroorotase.